A 909-amino-acid polypeptide reads, in one-letter code: Protein translocase subunit SecA (909 aa).

Residues Gln87, Gly105–Thr109, and Asp514 contribute to the ATP site. Residues Thr879–Ser909 are disordered. Residues Cys893, Cys895, Cys904, and His905 each coordinate Zn(2+). A compositionally biased stretch (basic residues) spans Lys899–Ser909.

Belongs to the SecA family. As to quaternary structure, monomer and homodimer. Part of the essential Sec protein translocation apparatus which comprises SecA, SecYEG and auxiliary proteins SecDF-YajC and YidC. Zn(2+) is required as a cofactor.

It is found in the cell inner membrane. The protein resides in the cytoplasm. It catalyses the reaction ATP + H2O + cellular proteinSide 1 = ADP + phosphate + cellular proteinSide 2.. Part of the Sec protein translocase complex. Interacts with the SecYEG preprotein conducting channel. Has a central role in coupling the hydrolysis of ATP to the transfer of proteins into and across the cell membrane, serving both as a receptor for the preprotein-SecB complex and as an ATP-driven molecular motor driving the stepwise translocation of polypeptide chains across the membrane. The sequence is that of Protein translocase subunit SecA from Azoarcus sp. (strain BH72).